A 90-amino-acid polypeptide reads, in one-letter code: MSDAHGIARDQLRAFIERIERLEEEKKTIADDIKDVYGEAKSMGFDAKILRKVISIRKQDADERMEQEAILDTYLQALGMIPAVEAEDAA.

This sequence belongs to the UPF0335 family.

The chain is UPF0335 protein R02793 from Rhizobium meliloti (strain 1021) (Ensifer meliloti).